The chain runs to 83 residues: DNA-directed RNA polymerase subunit omega (83 aa).

The protein belongs to the RNA polymerase subunit omega family. As to quaternary structure, the RNAP catalytic core consists of 2 alpha, 1 beta, 1 beta' and 1 omega subunit. When a sigma factor is associated with the core the holoenzyme is formed, which can initiate transcription.

The enzyme catalyses RNA(n) + a ribonucleoside 5'-triphosphate = RNA(n+1) + diphosphate. In terms of biological role, promotes RNA polymerase assembly. Latches the N- and C-terminal regions of the beta' subunit thereby facilitating its interaction with the beta and alpha subunits. This chain is DNA-directed RNA polymerase subunit omega, found in Chromohalobacter salexigens (strain ATCC BAA-138 / DSM 3043 / CIP 106854 / NCIMB 13768 / 1H11).